A 209-amino-acid polypeptide reads, in one-letter code: Large ribosomal subunit protein uL3 (209 aa).

The disordered stretch occupies residues 126 to 148; sequence HGQSRGPMAHGSRYHRRPGSMGP.

Belongs to the universal ribosomal protein uL3 family. In terms of assembly, part of the 50S ribosomal subunit. Forms a cluster with proteins L14 and L19.

In terms of biological role, one of the primary rRNA binding proteins, it binds directly near the 3'-end of the 23S rRNA, where it nucleates assembly of the 50S subunit. The chain is Large ribosomal subunit protein uL3 from Listeria innocua serovar 6a (strain ATCC BAA-680 / CLIP 11262).